The chain runs to 181 residues: ADP-ribosylation factor 1 (181 aa).

A lipid anchor (N-myristoyl glycine) is attached at G2. GTP contacts are provided by residues 24–31 (GLDAAGKT), 67–71 (DVGGQ), and 126–129 (NKQD).

The protein belongs to the small GTPase superfamily. Arf family. Interacts with AGD7 and GDAP1. GDP-locked form interacts with cytosolic tail of p24 proteins. Interacts with AGD5 at trans-Golgi network. Interacts with A.tumefaciens AK6b.

The protein resides in the golgi apparatus. It localises to the endosome. Its subcellular location is the trans-Golgi network. The protein localises to the early endosome. The catalysed reaction is GTP + H2O = GDP + phosphate + H(+). Its activity is regulated as follows. Activated by AGD7 and AGD10. Functionally, GTP-binding protein involved in protein trafficking; required for the sequence-specific vacuolar sorting route to the lytic vacuole, for the ER-to-Golgi transport and for the Golgi-derived transport to the plasma membrane. Involved in the recruitment of COPI and GDAP1 to membranes. Required for recycling of PIN auxin transporters (e.g. PIN1 and PIN2) in a fungal toxin brefeldin A (BFA)-dependent manner. Involved in various auxin-dependent developmental processes. The sequence is that of ADP-ribosylation factor 1 from Arabidopsis thaliana (Mouse-ear cress).